The primary structure comprises 168 residues: Pathogenesis-related protein 1C (168 aa).

The signal sequence occupies residues 1 to 30; that stretch reads MEFVLFSQMSSFFLVSTLLLFLIISHSCHA. Positions 38 to 156 constitute an SCP domain; sequence LDAHNTARAD…NGGYIVSCNY (119 aa).

This sequence belongs to the CRISP family. Post-translationally, three disulfide bonds are present.

The protein localises to the vacuole. Probably involved in the defense reaction of plants against pathogens. This chain is Pathogenesis-related protein 1C, found in Nicotiana tabacum (Common tobacco).